The following is a 352-amino-acid chain: Probable dual-specificity RNA methyltransferase RlmN (352 aa).

The Proton acceptor role is filled by E92. The Radical SAM core domain occupies Y98–D328. C105 and C333 are disulfide-bonded. The [4Fe-4S] cluster site is built by C112, C116, and C119. S-adenosyl-L-methionine is bound by residues G159–E160, S191, S214–H216, and N290. Residue C333 is the S-methylcysteine intermediate of the active site.

Belongs to the radical SAM superfamily. RlmN family. The cofactor is [4Fe-4S] cluster.

Its subcellular location is the cytoplasm. It catalyses the reaction adenosine(2503) in 23S rRNA + 2 reduced [2Fe-2S]-[ferredoxin] + 2 S-adenosyl-L-methionine = 2-methyladenosine(2503) in 23S rRNA + 5'-deoxyadenosine + L-methionine + 2 oxidized [2Fe-2S]-[ferredoxin] + S-adenosyl-L-homocysteine. The enzyme catalyses adenosine(37) in tRNA + 2 reduced [2Fe-2S]-[ferredoxin] + 2 S-adenosyl-L-methionine = 2-methyladenosine(37) in tRNA + 5'-deoxyadenosine + L-methionine + 2 oxidized [2Fe-2S]-[ferredoxin] + S-adenosyl-L-homocysteine. In terms of biological role, specifically methylates position 2 of adenine 2503 in 23S rRNA and position 2 of adenine 37 in tRNAs. This Alkaliphilus metalliredigens (strain QYMF) protein is Probable dual-specificity RNA methyltransferase RlmN.